A 228-amino-acid polypeptide reads, in one-letter code: DNA repair protein RecO (228 aa).

The protein belongs to the RecO family.

In terms of biological role, involved in DNA repair and RecF pathway recombination. This is DNA repair protein RecO from Mannheimia succiniciproducens (strain KCTC 0769BP / MBEL55E).